The primary structure comprises 136 residues: Protein NrdI (136 aa).

This sequence belongs to the NrdI family.

In terms of biological role, probably involved in ribonucleotide reductase function. This chain is Protein NrdI, found in Escherichia coli O1:K1 / APEC.